A 1006-amino-acid polypeptide reads, in one-letter code: Unconventional myosin-Id (1006 aa).

N-acetylalanine is present on Ala2. Residues 9 to 695 form the Myosin motor domain; it reads FGKADFVLMD…TLFTLEELRA (687 aa). Residue 102–109 participates in ATP binding; the sequence is GESGAGKT. Position 200 is a phosphoserine (Ser200). Residue Tyr536 is modified to Phosphotyrosine. The segment at 572–594 is actin-binding; sequence MIALVDNLASKEPYYVRCIKPND. IQ domains are found at residues 699–719 and 721–741; these read IRIVLFLQKVWRGTLARMRYK and TKAALTIIRYYRHYKVKSYIQ. Positions 812–1005 constitute a TH1 domain; sequence GQRADLGLQR…RSGFILSVPG (194 aa).

This sequence belongs to the TRAFAC class myosin-kinesin ATPase superfamily. Myosin family. As to quaternary structure, interacts (via the two IQ motifs) with calmodulin. Binds an additional calmodulin chain via a third, C-terminal region. Interacts with F-actin.

The protein resides in the cytoplasm. The protein localises to the perikaryon. It is found in the cell projection. It localises to the dendrite. Its subcellular location is the early endosome. The protein resides in the cell cortex. Its function is as follows. Unconventional myosin that functions as actin-based motor protein with ATPase activity. Plays a role in endosomal protein trafficking, and especially in the transfer of cargo proteins from early to recycling endosomes. Required for normal planar cell polarity in ciliated tracheal cells, for normal rotational polarity of cilia, and for coordinated, unidirectional ciliary movement in the trachea. Required for normal, polarized cilia organization in brain ependymal epithelial cells. The polypeptide is Unconventional myosin-Id (MYO1D) (Canis lupus familiaris (Dog)).